The primary structure comprises 466 residues: Protein hob1 (466 aa).

The BAR domain maps to 17–269; that stretch reads LRSKFNVGEI…RGDVKDRAEA (253 aa). Coiled coils occupy residues 31 to 67 and 177 to 204; these read IYEDAGRRFKSLETEAKKLAEDAKKYTDAINGLLNHQ and EKKLYEAETAFEQSSQEYEYYNEMLKEE. The tract at residues 280–342 is disordered; that stretch reads PTYKRPGMGP…ASDYSTPSAG (63 aa). A compositionally biased stretch (low complexity) spans 294–303; that stretch reads ATASSSSSFS. 4 positions are modified to phosphoserine: S298, S299, S301, and S303. The region spanning 407–466 is the SH3 domain; sequence PAAEHVVALYDYAAQAAGDLSFHAGDRIEVVSRTDNQNEWWIGRLNGAQGQFPGNYVQLE.

Functionally, has a role in DNA damage signaling as a part of stress response processes. This is Protein hob1 (hob1) from Schizosaccharomyces pombe (strain 972 / ATCC 24843) (Fission yeast).